The following is a 406-amino-acid chain: Probable endo-xylogalacturonan hydrolase A (406 aa).

The N-terminal stretch at 1–18 (MTLYRNLLLLASLGLSYA) is a signal peptide. N-linked (GlcNAc...) asparagine glycosylation is present at asparagine 84. 2 PbH1 repeats span residues 183–213 (ATNV…DIGE) and 214–235 (STYV…ALKP). Aspartate 228 serves as the catalytic Proton donor. Histidine 251 is a catalytic residue. PbH1 repeat units follow at residues 266–289 (VKNI…KTYP), 299–320 (VSNV…QIQS), and 333–375 (PGNA…SISG). N-linked (GlcNAc...) asparagine glycans are attached at residues asparagine 278 and asparagine 301.

Belongs to the glycosyl hydrolase 28 family.

Its subcellular location is the secreted. Pectinolytic enzyme involved in the degradation of xylogalacturonan (xga), a galacturonan backbone heavily substituted with xylose, and which is one important component of the hairy regions of pectin. Activity requires a galacturonic acid backbone substituted with xylose. The sequence is that of Probable endo-xylogalacturonan hydrolase A (xghA) from Aspergillus niger (strain ATCC MYA-4892 / CBS 513.88 / FGSC A1513).